The following is a 129-amino-acid chain: Small ribosomal subunit protein uS11 (129 aa).

This sequence belongs to the universal ribosomal protein uS11 family. As to quaternary structure, part of the 30S ribosomal subunit. Interacts with proteins S7 and S18. Binds to IF-3.

Its function is as follows. Located on the platform of the 30S subunit, it bridges several disparate RNA helices of the 16S rRNA. Forms part of the Shine-Dalgarno cleft in the 70S ribosome. The polypeptide is Small ribosomal subunit protein uS11 (Francisella tularensis subsp. mediasiatica (strain FSC147)).